A 465-amino-acid polypeptide reads, in one-letter code: Soluble pyridine nucleotide transhydrogenase (465 aa).

36 to 45 (ERYNNVGGGC) contributes to the FAD binding site.

Belongs to the class-I pyridine nucleotide-disulfide oxidoreductase family. Requires FAD as cofactor.

Its subcellular location is the cytoplasm. It catalyses the reaction NAD(+) + NADPH = NADH + NADP(+). Its function is as follows. Conversion of NADPH, generated by peripheral catabolic pathways, to NADH, which can enter the respiratory chain for energy generation. This Serratia proteamaculans (strain 568) protein is Soluble pyridine nucleotide transhydrogenase.